The chain runs to 412 residues: Alpha-1-antiproteinase (412 aa).

A signal peptide spans 1–24; that stretch reads MTPSISWGLLLLAGLFCLVPSFLA. At Ser33 the chain carries Phosphoserine. Asn100, Asn133, Asn264, and Asn313 each carry an N-linked (GlcNAc...) asparagine glycan. The tract at residues 367–386 is RCL; that stretch reads AATVLQAVPMSMPPILNFNK. Ser377 carries the post-translational modification Phosphoserine.

Belongs to the serpin family. In terms of assembly, interacts with CELA2A. Interacts with ERGIC3 and LMAN1/ERGIC53. Interacts with PRSS1/Trypsin. Expressed not only in liver but also in kidney tubule cells, where it is regulated by androgens during development.

It is found in the secreted. In terms of biological role, inhibitor of serine proteases. Its primary target is elastase, but it also has a moderate affinity for plasmin and thrombin. This is Alpha-1-antiproteinase (Serpina1) from Mus caroli (Ryukyu mouse).